A 416-amino-acid polypeptide reads, in one-letter code: Adenylosuccinate synthetase (416 aa).

Residues glycine 12–lysine 18 and glycine 40–threonine 42 contribute to the GTP site. Residue aspartate 13 is the Proton acceptor of the active site. Residues aspartate 13 and glycine 40 each coordinate Mg(2+). IMP is bound by residues aspartate 13–lysine 16, asparagine 38–histidine 41, threonine 125, arginine 139, glutamine 220, threonine 235, and arginine 299. Histidine 41 functions as the Proton donor in the catalytic mechanism. Residue threonine 295–arginine 301 participates in substrate binding. GTP is bound by residues arginine 301, lysine 327–aspartate 329, and serine 405–serine 407.

The protein belongs to the adenylosuccinate synthetase family. Homodimer. Mg(2+) serves as cofactor.

It is found in the cytoplasm. The catalysed reaction is IMP + L-aspartate + GTP = N(6)-(1,2-dicarboxyethyl)-AMP + GDP + phosphate + 2 H(+). It participates in purine metabolism; AMP biosynthesis via de novo pathway; AMP from IMP: step 1/2. Plays an important role in the de novo pathway of purine nucleotide biosynthesis. Catalyzes the first committed step in the biosynthesis of AMP from IMP. The polypeptide is Adenylosuccinate synthetase (Nitratiruptor sp. (strain SB155-2)).